A 265-amino-acid polypeptide reads, in one-letter code: Type 1 encapsulin shell protein (265 aa).

FMN is bound by residues 79–81 and Trp-87; that span reads RAT. The tract at residues 184-189 is pore-forming loop; the sequence is EAGHYP. Position 235 (Glu-235) interacts with FMN.

This sequence belongs to the encapsulin family. Family 1 subfamily. This encapsulin nanocompartment is formed by 60 subunits; monomers form pentamers which assemble to form shells. There are 12 pores where the pentamers meet as well as 3-fold axis channels and dimer channels; none are larger than 3-4 Angstroms in diameter. The N-terminus of the protein is inside the shell, the C-terminus is outside. FMN is required as a cofactor.

The protein localises to the encapsulin nanocompartment. In terms of biological role, shell component of a type 1 encapsulin nanocompartment. Assembles into proteinaceous shells 23-24 nm in diameter with 2-2.5 nm thick walls. Cargo protein Flp (ferritin-like protein, may store iron) is targeted to the interior via its C-terminal extension. This is Type 1 encapsulin shell protein from Thermotoga petrophila (strain ATCC BAA-488 / DSM 13995 / JCM 10881 / RKU-1).